A 398-amino-acid polypeptide reads, in one-letter code: MRKKECIAMLLAGGQGSRLGCLTRNIPKPAVSFAGKYRIIDFSLSNCSNSNIDTVGVLTQYKPFALNTYINMGSAWDLNCLNGGIHILPPFVGEAQGSWYKGTANAIYQNMDFINFYNPEYILILSGDHIYQMDYYEMLSYHKQKHAEVTLSAIAVPWEEASRFGVMVTDAGGRIIRFEEKPPRPESNLASMGVYIFKWDVLKEALLEDEQDPQSDHDFGKNVLPRLLQQGRRLYSYLFHGYWRDVGTIESYYNANMEVLQEERVDKFFELKQRVFSNEEILAPQHLGERAKIHNSLIGNGCTILGEVRDSVIASGVYVGEGSLIEQSILLPNSEIYEDVRLHKTILGENAIVRAHCRIGDKREGNPPQEGITVIGDHLHIPEGTVISEGENVRKDTA.

Residues Y100, G165, 180-181 (EK), and S191 contribute to the alpha-D-glucose 1-phosphate site.

This sequence belongs to the bacterial/plant glucose-1-phosphate adenylyltransferase family. In terms of assembly, homotetramer.

The enzyme catalyses alpha-D-glucose 1-phosphate + ATP + H(+) = ADP-alpha-D-glucose + diphosphate. Its pathway is glycan biosynthesis; glycogen biosynthesis. Involved in the biosynthesis of ADP-glucose, a building block required for the elongation reactions to produce glycogen. Catalyzes the reaction between ATP and alpha-D-glucose 1-phosphate (G1P) to produce pyrophosphate and ADP-Glc. In Desulfitobacterium hafniense (strain Y51), this protein is Glucose-1-phosphate adenylyltransferase.